Consider the following 179-residue polypeptide: uncharacterized protein (179 aa).

4 helical membrane-spanning segments follow: residues 9–31 (WILV…VSTL), 41–63 (AFLL…YGSF), 114–136 (AYYG…LLGA), and 146–168 (AFWG…NYLM).

The protein localises to the cell membrane. This is an uncharacterized protein from Aquifex aeolicus (strain VF5).